Reading from the N-terminus, the 273-residue chain is Shikimate dehydrogenase (NADP(+)) (273 aa).

Residues 14 to 16 (SKS) and threonine 61 contribute to the shikimate site. Lysine 65 (proton acceptor) is an active-site residue. Aspartate 77 contributes to the NADP(+) binding site. Residues asparagine 86 and aspartate 102 each contribute to the shikimate site. Residues 127 to 131 (GAGGA), 151 to 156 (NRTGAR), and methionine 215 each bind NADP(+). Residue tyrosine 217 coordinates shikimate. Residue glycine 239 coordinates NADP(+).

It belongs to the shikimate dehydrogenase family. As to quaternary structure, homodimer.

The catalysed reaction is shikimate + NADP(+) = 3-dehydroshikimate + NADPH + H(+). It functions in the pathway metabolic intermediate biosynthesis; chorismate biosynthesis; chorismate from D-erythrose 4-phosphate and phosphoenolpyruvate: step 4/7. In terms of biological role, involved in the biosynthesis of the chorismate, which leads to the biosynthesis of aromatic amino acids. Catalyzes the reversible NADPH linked reduction of 3-dehydroshikimate (DHSA) to yield shikimate (SA). The polypeptide is Shikimate dehydrogenase (NADP(+)) (Thioalkalivibrio sulfidiphilus (strain HL-EbGR7)).